A 121-amino-acid polypeptide reads, in one-letter code: Small ribosomal subunit protein uS13 (121 aa).

The disordered stretch occupies residues 92 to 121; it reads RKGLPVRGQSSKTNARTVKGPRKTVANKKK. Basic residues predominate over residues 110–121; that stretch reads KGPRKTVANKKK.

The protein belongs to the universal ribosomal protein uS13 family. In terms of assembly, part of the 30S ribosomal subunit. Forms a loose heterodimer with protein S19. Forms two bridges to the 50S subunit in the 70S ribosome.

In terms of biological role, located at the top of the head of the 30S subunit, it contacts several helices of the 16S rRNA. In the 70S ribosome it contacts the 23S rRNA (bridge B1a) and protein L5 of the 50S subunit (bridge B1b), connecting the 2 subunits; these bridges are implicated in subunit movement. Contacts the tRNAs in the A and P-sites. This chain is Small ribosomal subunit protein uS13, found in Mycoplasma mycoides subsp. mycoides SC (strain CCUG 32753 / NCTC 10114 / PG1).